Here is a 919-residue protein sequence, read N- to C-terminus: WD repeat-containing protein 47 (919 aa).

A LisH domain is found at K10–N42. Positions F45 to S102 constitute a CTLH domain. Residue T285 is modified to Phosphothreonine. S289, S292, S297, and S312 each carry phosphoserine. The disordered stretch occupies residues G393–D421. S422 carries the phosphoserine modification. The disordered stretch occupies residues L500–D590. Residues V517 to H551 are compositionally biased toward polar residues. Residue T542 is modified to Phosphothreonine. 7 WD repeats span residues E604 to A643, H659 to T698, M706 to L748, G753 to V791, G798 to S837, P840 to L879, and E886 to N918.

Interacts with MAP1S (via WD repeats).

The protein localises to the cytoplasm. It is found in the cytoskeleton. The chain is WD repeat-containing protein 47 (WDR47) from Homo sapiens (Human).